The following is a 961-amino-acid chain: Vitamin B12-dependent ribonucleotide reductase (961 aa).

The tract at residues 1-23 is disordered; sequence MTETTSGPARGSRTKGTKATKGL. Substrate-binding positions include serine 143, 159–160, glycine 188, 364–368, and 554–558; these read AC, NPCSE, and PTGTI. Cysteines 160 and 377 form a disulfide. Asparagine 364 (proton acceptor) is an active-site residue. Cysteine 366 functions as the Cysteine radical intermediate in the catalytic mechanism. Glutamate 368 (proton acceptor) is an active-site residue.

It belongs to the ribonucleoside diphosphate reductase class-2 family. As to quaternary structure, homotetramer. Requires adenosylcob(III)alamin as cofactor.

The enzyme catalyses a 2'-deoxyribonucleoside 5'-diphosphate + [thioredoxin]-disulfide + H2O = a ribonucleoside 5'-diphosphate + [thioredoxin]-dithiol. Its function is as follows. Catalyzes the reduction of ribonucleotides to deoxyribonucleotides. May function to provide a pool of deoxyribonucleotide precursors for DNA repair during oxygen limitation and/or for immediate growth after restoration of oxygen. The polypeptide is Vitamin B12-dependent ribonucleotide reductase (nrdJ) (Streptomyces clavuligerus).